The sequence spans 111 residues: Disintegrin acostatin-alpha (111 aa).

Positions 1–20 (MIQVLLVTLCLAVFPYQGSS) are cleaved as a signal peptide. Residues 21–46 (IILESGNVNDYEVVYPRKVTALPKGA) constitute a propeptide that is removed on maturation. Residues 47–111 (IQPKNPCCDA…GDCPRKHFYA (65 aa)) form the Disintegrin domain. The residue at position 48 (Q48) is a Pyrrolidone carboxylic acid; in Disintegrin acostatin-alpha, processed form. Cystine bridges form between C53-C76, C67-C73, C72-C97, and C85-C104. The Cell attachment site signature appears at 89-91 (RGD). The propeptide occupies 110–111 (YA).

The protein belongs to the disintegrin family. Dimeric disintegrin subfamily. In terms of assembly, heterodimer with subunit beta; disulfide-linked. Expressed by the venom gland.

It localises to the secreted. Inhibits fibrinogen interaction with platelets. Acts by binding to alpha-IIb/beta-3 (ITGA2B/ITGB3) on the platelet surface and inhibits ADP-induced platelet aggregation in human platelet-rich plasma. This chain is Disintegrin acostatin-alpha, found in Agkistrodon contortrix contortrix (Southern copperhead).